The following is a 492-amino-acid chain: Catalase (492 aa).

Active-site residues include His65 and Asn138. Tyr348 is a binding site for heme.

It belongs to the catalase family. In terms of assembly, homotetramer. Heme serves as cofactor.

The protein resides in the cytoplasm. Its subcellular location is the cytosol. It is found in the peroxisome matrix. It carries out the reaction 2 H2O2 = O2 + 2 H2O. Functionally, catalyzes the degradation of hydrogen peroxide (H(2)O(2)) generated by peroxisomal oxidases to water and oxygen, thereby protecting cells from the toxic effects of hydrogen peroxide. The chain is Catalase from Ipomoea batatas (Sweet potato).